A 246-amino-acid chain; its full sequence is Phosphomannomutase (246 aa).

Aspartate 13 acts as the Nucleophile in catalysis. Residues aspartate 13 and aspartate 15 each contribute to the Mg(2+) site. The active-site Proton donor/acceptor is aspartate 15. Residues arginine 22, arginine 124, arginine 135, arginine 142, serine 180, and aspartate 182 each contribute to the alpha-D-mannose 1-phosphate site. Aspartate 208, tyrosine 220, and threonine 225 together coordinate Mg(2+).

The protein belongs to the eukaryotic PMM family. As to quaternary structure, homodimer. Requires Mg(2+) as cofactor. As to expression, expressed in roots, stems, leaves, flowers and immature fruits.

It localises to the cytoplasm. The enzyme catalyses alpha-D-mannose 1-phosphate = D-mannose 6-phosphate. The protein operates within nucleotide-sugar biosynthesis; GDP-alpha-D-mannose biosynthesis; alpha-D-mannose 1-phosphate from D-fructose 6-phosphate: step 2/2. Functionally, catalyzes the interconversion of mannose-6-phosphate to mannose-1-phosphate, the precursor for the synthesis of GDP-mannose. GDP-mannose is an essential sugar nucleotide for the synthesis of D-mannose-containing cell wall polysaccharides (galactomannans and glucomannans), glycolipids, glycoproteins and the antioxidant L-ascorbate. Can complement the yeast temperature-sensitive mutant sec53-6. The sequence is that of Phosphomannomutase from Arabidopsis thaliana (Mouse-ear cress).